Consider the following 348-residue polypeptide: Hereditary hemochromatosis protein homolog (348 aa).

An N-terminal signal peptide occupies residues 1–22; the sequence is MGPRARPALFFLILLRTVAAQG. Residues 23–114 form an alpha-1 region; it reads RPPRSHSLRY…IMDNHNHSKE (92 aa). Over 23–306 the chain is Extracellular; that stretch reads RPPRSHSLRY…WEPSLSNTLV (284 aa). Asparagine 110, asparagine 130, and asparagine 234 each carry an N-linked (GlcNAc...) asparagine glycan. The tract at residues 115 to 205 is alpha-2; the sequence is SHTLQVILGC…ELGRGVLDQQ (91 aa). 2 cysteine pairs are disulfide-bonded: cysteine 124–cysteine 187 and cysteine 225–cysteine 282. The segment at 206–297 is alpha-3; the sequence is VPPLVKVTHH…GLDQPLTATW (92 aa). Residues 207-296 form the Ig-like C1-type domain; sequence PPLVKVTHHV…PGLDQPLTAT (90 aa). The interval 298 to 306 is connecting peptide; sequence EPSLSNTLV. The helical transmembrane segment at 307-330 threads the bilayer; it reads TGVISGIAVCVIIFLIGILFRILR. Residues 331–348 lie on the Cytoplasmic side of the membrane; sequence KRQASRGAMGDYVLAECE.

This sequence belongs to the MHC class I family. As to quaternary structure, binds TFR through the extracellular domain in a pH-dependent manner.

The protein resides in the cell membrane. Binds to transferrin receptor (TFR) and reduces its affinity for iron-loaded transferrin. The chain is Hereditary hemochromatosis protein homolog (HFE) from Rhinoceros unicornis (Greater Indian rhinoceros).